A 60-amino-acid polypeptide reads, in one-letter code: Cecropin-B type 1 (60 aa).

A signal peptide spans 1 to 24 (MNFNKLFALVLLIGLVLLTGQTEA). Ile58 carries the isoleucine amide modification.

This sequence belongs to the cecropin family.

Its subcellular location is the secreted. Its function is as follows. Cecropins have lytic and antibacterial activity against several Gram-positive and Gram-negative bacteria. The chain is Cecropin-B type 1 (CECB1) from Aedes albopictus (Asian tiger mosquito).